Consider the following 254-residue polypeptide: Probable transcriptional regulatory protein Saro_0419 (254 aa).

Basic residues predominate over residues 1 to 14 (MAGHSKFKNIMHRK). Positions 1 to 22 (MAGHSKFKNIMHRKGAQDKKRS) are disordered.

Belongs to the TACO1 family.

Its subcellular location is the cytoplasm. This is Probable transcriptional regulatory protein Saro_0419 from Novosphingobium aromaticivorans (strain ATCC 700278 / DSM 12444 / CCUG 56034 / CIP 105152 / NBRC 16084 / F199).